A 117-amino-acid polypeptide reads, in one-letter code: S-adenosylmethionine decarboxylase proenzyme (117 aa).

Ser-63 serves as the catalytic Schiff-base intermediate with substrate; via pyruvic acid. At Ser-63 the chain carries Pyruvic acid (Ser); by autocatalysis. His-68 functions as the Proton acceptor; for processing activity in the catalytic mechanism. Cys-83 acts as the Proton donor; for catalytic activity in catalysis.

This sequence belongs to the prokaryotic AdoMetDC family. Type 1 subfamily. In terms of assembly, heterotetramer of two alpha and two beta chains arranged as a dimer of alpha/beta heterodimers. It depends on pyruvate as a cofactor. Post-translationally, is synthesized initially as an inactive proenzyme. Formation of the active enzyme involves a self-maturation process in which the active site pyruvoyl group is generated from an internal serine residue via an autocatalytic post-translational modification. Two non-identical subunits are generated from the proenzyme in this reaction, and the pyruvate is formed at the N-terminus of the alpha chain, which is derived from the carboxyl end of the proenzyme. The post-translation cleavage follows an unusual pathway, termed non-hydrolytic serinolysis, in which the side chain hydroxyl group of the serine supplies its oxygen atom to form the C-terminus of the beta chain, while the remainder of the serine residue undergoes an oxidative deamination to produce ammonia and the pyruvoyl group blocking the N-terminus of the alpha chain.

The catalysed reaction is S-adenosyl-L-methionine + H(+) = S-adenosyl 3-(methylsulfanyl)propylamine + CO2. Its pathway is amine and polyamine biosynthesis; S-adenosylmethioninamine biosynthesis; S-adenosylmethioninamine from S-adenosyl-L-methionine: step 1/1. In terms of biological role, catalyzes the decarboxylation of S-adenosylmethionine to S-adenosylmethioninamine (dcAdoMet), the propylamine donor required for the synthesis of the polyamines spermine and spermidine from the diamine putrescine. This is S-adenosylmethionine decarboxylase proenzyme from Methanococcus aeolicus (strain ATCC BAA-1280 / DSM 17508 / OCM 812 / Nankai-3).